Here is a 575-residue protein sequence, read N- to C-terminus: Arginine--tRNA ligase (575 aa).

The 'HIGH' region signature appears at 136-146 (ANPTGPLHVGH).

The protein belongs to the class-I aminoacyl-tRNA synthetase family. Monomer.

Its subcellular location is the cytoplasm. The catalysed reaction is tRNA(Arg) + L-arginine + ATP = L-arginyl-tRNA(Arg) + AMP + diphosphate. This chain is Arginine--tRNA ligase, found in Polynucleobacter necessarius subsp. necessarius (strain STIR1).